A 205-amino-acid chain; its full sequence is Beta-crystallin B2 (205 aa).

The residue at position 2 (Ala-2) is an N-acetylalanine. The N-terminal arm stretch occupies residues 2–16 (ASDHQSPATKQQQPS). Beta/gamma crystallin 'Greek key' domains follow at residues 17–56 (SKIV…LVHS) and 57–101 (GPWV…RPIK). The segment at 102–106 (VDSQE) is connecting peptide. 2 Beta/gamma crystallin 'Greek key' domains span residues 107-148 (HKIV…RVQS) and 149-191 (GTWV…RRIR). Residues 193–205 (MQWHQRGTFHPTN) are C-terminal arm.

It belongs to the beta/gamma-crystallin family. Homo/heterodimer, or complexes of higher-order. The structure of beta-crystallin oligomers seems to be stabilized through interactions between the N-terminal arms. In terms of processing, the N-terminus is blocked.

Its function is as follows. Crystallins are the dominant structural components of the vertebrate eye lens. This chain is Beta-crystallin B2, found in Aquarana catesbeiana (American bullfrog).